The sequence spans 874 residues: MEKLAAGLAGLRWSMGAFPLDLIVSRCRLPTLACLGPGEYAEGVSERDILLIHSCRQWTTVTAHTLEEGHYVIGPKIDIPLQYPGKFKLLEQARDVREPVRYFSSVEEVASVFPDRIFVMEAITFSVKVVSGEFSEDSEVYNFTLHAGDELTLMGQAEILCAKTTKERSRFTTLLRKLGRAGALAGVGGGGPASAGAAGGTGGGGARPVKGKMPCLICMNHRTNESLSLPFQCQGRFSTRSPLELQMQEGEHTVRAIIERVRLPVNVLVPSRPPRNPYDLHPVREGHCYKLVSIISKTVVLGLALRREGPAPLHFLLLTDTPRFALPQGLLAGDPRVERLVRDSASYCRERFDPDEYSTAVREAPAELAEDCASPRRARLCLPAPRAPGLARAPGPLAPAPAGEGDQEYVSPDWAAAPEPAAPPAEIPYEELWAHQGPEGLVRPPPGLDLISFGAAGPPRREPEAPPPPVPPKSEAVKEECRLLNAPPVPPRGGNGSGRLSSSPPVPPRFPKLQPVHSPSSSLSYYSSGLQDGAGSRSGSGSPSPDTYSLYCYPCTWGDCKVGESSSRPAPGPLPSTTQPSQASRALTEPLSGRAASLLGADTPVKTYHSCPPLFKPSHPQKRFAPFGALNPFSGPAYPSGPSAALSSGPRTTSGPVATSGPAYSPGPASPGQAYSAAPPSSCAPSSSSSSEWQEPVLEPFDPFELGQGSSPEPELLRSQEPRAVGTPGPGPRLSPLGPSKAFEPEGLVLHQVPTPLSPAALQGPEAGGALFLTQGRLEGPPASPRDGATGFGVRDASSWQPPADLSALSLEEVSRSLRFIGLSEDVVSFFARERIDGSIFVQLSEDILADDFHLTKLQVKKIMQFIKGWRPKI.

Positions 12–339 are CABIT; the sequence is RWSMGAFPLD…LLAGDPRVER (328 aa). Gly residues predominate over residues 188 to 206; sequence GGGGPASAGAAGGTGGGGA. Disordered regions lie at residues 188 to 207, 388 to 422, 437 to 545, 563 to 598, and 625 to 742; these read GGGGPASAGAAGGTGGGGAR, PGLARAPGPLAPAPAGEGDQEYVSPDWAAAPEPAA, GPEG…SPSP, GESSSRPAPGPLPSTTQPSQASRALTEPLSGRAASL, and APFG…PSKA. 2 stretches are compositionally biased toward low complexity: residues 388–403 and 518–545; these read PGLARAPGPLAPAPAG and SPSSSLSYYSSGLQDGAGSRSGSGSPSP. Positions 575-585 are enriched in polar residues; it reads PSTTQPSQASR. Composition is skewed to low complexity over residues 632-650 and 658-691; these read PFSGPAYPSGPSAALSSGP and ATSGPAYSPGPASPGQAYSAAPPSSCAPSSSSSS. The residue at position 735 (Ser735) is a Phosphoserine. Residues 807 to 871 form the SAM domain; sequence SALSLEEVSR…KIMQFIKGWR (65 aa).

It belongs to the GAREM family.

Probable adapter protein that may provide a link between cell surface epidermal growth factor receptor and the MAPK/ERK signaling pathway. The protein is GRB2-associated and regulator of MAPK protein 2 (GAREM2) of Homo sapiens (Human).